The primary structure comprises 359 residues: MRKIIHIDMDCYFAAVEMRDFPEYRGKPLAVGGSRVQRGVISTCNYEARKFGVRSAMATGYALKLCPNLILVPGRMQVYKEVSQQIRAIFSRYTELIEPLSLDEAYLDVSDCKLFKGSATLIAEAIRRDILAETGLTASAGVAPIKFLAKVASDLNKPNGQCVIPPDEVPEFVKSLSLRKIPGVGKVTAEKLSSLGLNTCADVQAYPKQELIARFGKFGAVLVERAHGIDERGISVSRERKSVGVETTLAQDIYTLEQCQQVMPGLIQELSSRLVRSAKGRQIHKQVVKLKFNDFKQTTIEHRSDEVSVVMFYELLSQAMARQEGRGIRLLGVSVGLAETKDTLSPLMVRETKQLDFVF.

A UmuC domain is found at 4 to 185; that stretch reads IIHIDMDCYF…LSLRKIPGVG (182 aa). Positions 8 and 103 each coordinate Mg(2+). The active site involves Glu104.

Belongs to the DNA polymerase type-Y family. As to quaternary structure, monomer. It depends on Mg(2+) as a cofactor.

The protein resides in the cytoplasm. The enzyme catalyses DNA(n) + a 2'-deoxyribonucleoside 5'-triphosphate = DNA(n+1) + diphosphate. In terms of biological role, poorly processive, error-prone DNA polymerase involved in untargeted mutagenesis. Copies undamaged DNA at stalled replication forks, which arise in vivo from mismatched or misaligned primer ends. These misaligned primers can be extended by PolIV. Exhibits no 3'-5' exonuclease (proofreading) activity. May be involved in translesional synthesis, in conjunction with the beta clamp from PolIII. In Shewanella sp. (strain MR-4), this protein is DNA polymerase IV.